The chain runs to 416 residues: PRKCA-binding protein (416 aa).

The 84-residue stretch at 22–105 (KVTLQKDAQN…EVTIHYNKLQ (84 aa)) folds into the PDZ domain. Residues C44 and C46 each coordinate Zn(2+). Phosphothreonine is present on T82. Positions 144–357 (LCNDGLVKRL…CYAVLRDADV (214 aa)) constitute an AH domain. The segment at 373 to 416 (PNQGGFTDGEDEEEEEEDGAAREVSKDARGATGPTDKGGSWCDS) is disordered. Residues 380–390 (DGEDEEEEEED) are compositionally biased toward acidic residues. Residues 391-401 (GAAREVSKDAR) show a composition bias toward basic and acidic residues. Residue C414 is the site of S-palmitoyl cysteine; by DHHC8 attachment.

In terms of assembly, monomer and homodimer. Interacts with CXADR. Interacts presynaptically with the glutamate receptors GRIA2, GRIA3, GRIK3, isoform 3 of GRIA4, isoform A of GRM4, GRM7 and GRM8; with NAPA and NAPB; and with BTG2. The interaction with NAPA and NAPB disrupts the interaction with GRIA2, conducting to the internalization of GRIA2. Interacts with PRKCA; with the amine transporters SLC6A2 and SLC6A3; with the channels ASIC1 and ASIC2; with the GTP-binding proteins ARF1 and ARF3; with the ephrin receptor tyrosine kinases EPHA7, EPHB1 and EPHB2; with ERBB2 and through its PDZ domain with the C-terminal tail of PRLHR. Interacts with UNC5A. Interacts (via AH domain) with NCS1/FREQ; in a calcium-dependent manner. Interacts with F-actin and associates with the ARP2/3 complex. Interacts (via PDZ domain) with ARF1 (activated); the interaction blocks Arp2/3 complex inhibition. Interacts with SORCS3. In terms of processing, phosphorylation at Thr-82 appears to inhibit the interaction with AMPA receptors. Palmitoylation on Cys-414 is essential for long-term synaptic depression (LTD). Ubiquitous.

The protein resides in the cytoplasm. Its subcellular location is the perinuclear region. The protein localises to the membrane. It localises to the postsynaptic density. It is found in the synapse. The protein resides in the synaptosome. Its subcellular location is the cytoskeleton. In terms of biological role, probable adapter protein that bind to and organize the subcellular localization of a variety of membrane proteins containing some PDZ recognition sequence. Involved in the clustering of various receptors, possibly by acting at the receptor internalization level. Plays a role in synaptic plasticity by regulating the trafficking and internalization of AMPA receptors. May be regulated upon PRKCA activation. May regulate ASIC1/ASIC3 channel. Regulates actin polymerization by inhibiting the actin-nucleating activity of the Arp2/3 complex; the function is competitive with nucleation promoting factors and is linked to neuronal morphology regulation and AMPA receptor (AMPAR) endocytosis. Via interaction with the Arp2/3 complex involved in regulation of synaptic plasicity of excitatory synapses and required for spine shrinkage during long-term depression (LTD). Involved in regulation of astrocyte morphology, antagonistic to Arp2/3 complex activator WASL/N-WASP function. This is PRKCA-binding protein (Pick1) from Rattus norvegicus (Rat).